We begin with the raw amino-acid sequence, 156 residues long: Crossover junction endodeoxyribonuclease RuvC (156 aa).

Residues Asp9, Glu69, and Asp141 contribute to the active site. Residues Asp9, Glu69, and Asp141 each contribute to the Mg(2+) site.

Belongs to the RuvC family. In terms of assembly, homodimer which binds Holliday junction (HJ) DNA. The HJ becomes 2-fold symmetrical on binding to RuvC with unstacked arms; it has a different conformation from HJ DNA in complex with RuvA. In the full resolvosome a probable DNA-RuvA(4)-RuvB(12)-RuvC(2) complex forms which resolves the HJ. Requires Mg(2+) as cofactor.

The protein resides in the cytoplasm. It carries out the reaction Endonucleolytic cleavage at a junction such as a reciprocal single-stranded crossover between two homologous DNA duplexes (Holliday junction).. In terms of biological role, the RuvA-RuvB-RuvC complex processes Holliday junction (HJ) DNA during genetic recombination and DNA repair. Endonuclease that resolves HJ intermediates. Cleaves cruciform DNA by making single-stranded nicks across the HJ at symmetrical positions within the homologous arms, yielding a 5'-phosphate and a 3'-hydroxyl group; requires a central core of homology in the junction. The consensus cleavage sequence is 5'-(A/T)TT(C/G)-3'. Cleavage occurs on the 3'-side of the TT dinucleotide at the point of strand exchange. HJ branch migration catalyzed by RuvA-RuvB allows RuvC to scan DNA until it finds its consensus sequence, where it cleaves and resolves the cruciform DNA. This is Crossover junction endodeoxyribonuclease RuvC from Acaryochloris marina (strain MBIC 11017).